The following is a 430-amino-acid chain: Adenylosuccinate synthetase (430 aa).

GTP-binding positions include glycine 12–lysine 18 and glycine 40–threonine 42. The Proton acceptor role is filled by aspartate 13. Residues aspartate 13 and glycine 40 each contribute to the Mg(2+) site. IMP contacts are provided by residues aspartate 13 to lysine 16, asparagine 38 to histidine 41, threonine 128, arginine 142, glutamine 223, threonine 238, and arginine 302. Catalysis depends on histidine 41, which acts as the Proton donor. A substrate-binding site is contributed by threonine 298–arginine 304. GTP contacts are provided by residues arginine 304, leucine 330 to aspartate 332, and serine 412 to glycine 414.

This sequence belongs to the adenylosuccinate synthetase family. Homodimer. Requires Mg(2+) as cofactor.

Its subcellular location is the cytoplasm. The enzyme catalyses IMP + L-aspartate + GTP = N(6)-(1,2-dicarboxyethyl)-AMP + GDP + phosphate + 2 H(+). It participates in purine metabolism; AMP biosynthesis via de novo pathway; AMP from IMP: step 1/2. Its function is as follows. Plays an important role in the de novo pathway of purine nucleotide biosynthesis. Catalyzes the first committed step in the biosynthesis of AMP from IMP. The protein is Adenylosuccinate synthetase of Listeria monocytogenes serotype 4a (strain HCC23).